We begin with the raw amino-acid sequence, 387 residues long: MGAGGRMTVPNKWEGEGDEKSQKPVQRVPSAKPPFTLSEIKKAIPPHCFKRSLLKSFSYVLYDLTLVAIFYYVATTYIDALPGPLRYAAWPVYWALQGCVLTGVWVIAHECGHHAFSDYQWVDDCVGLVLHSALLVPYFSWKYSHRRHHSNTGSLERDEVFVPKPKSKMPWFSKYLNNPPGRVMTLIVTLTLGWPLYLALNVSGWPYDRFACHFDPYGPIYTDRERLQIYISDVGIMAATYTLYKIAAARGLAWLVCVYGVPLLIVNAFLVTITYLQHTHPALPHYDSSEWDWLRGALATADRDYGILNKVFHNITDTHVAHHLFSTMPHYHAMEATKAIKPILGDYYQFDGTPVYKAMWREARECLYVEPDDGANSKGVFWYKKNL.

The disordered stretch occupies residues 1 to 31 (MGAGGRMTVPNKWEGEGDEKSQKPVQRVPSA). Residues 13-22 (WEGEGDEKSQ) are compositionally biased toward basic and acidic residues. The next 2 membrane-spanning stretches (helical) occupy residues 58 to 78 (SYVL…TTYI) and 88 to 108 (AAWP…WVIA). Residues 109–113 (HECGH) carry the Histidine box-1 motif. Residues 121–141 (WVDDCVGLVLHSALLVPYFSW) traverse the membrane as a helical segment. Residues 145 to 149 (HRRHH) carry the Histidine box-2 motif. A run of 3 helical transmembrane segments spans residues 183–203 (VMTL…LNVS), 229–249 (IYIS…IAAA), and 251–271 (GLAW…AFLV). The Histidine box-3 signature appears at 319 to 323 (HVAHH).

The protein belongs to the fatty acid desaturase type 1 family.

The protein localises to the membrane. It participates in lipid metabolism; polyunsaturated fatty acid biosynthesis. Functionally, delta(12)-fatty acid desaturase producing in a heterologous system linoleic acid (18:2(9Z,12Z)) and to a lower extent hexadecadienoic acid (16:2(9Z,12Z)). This Punica granatum (Pomegranate) protein is Delta(12)-acyl-lipid-desaturase.